We begin with the raw amino-acid sequence, 550 residues long: Eukaryotic translation initiation factor 3 subunit L (550 aa).

Positions 1-20 are disordered; it reads MVRDSFDGGHTGDPERDLAY. The PCI domain maps to 309–503; that stretch reads EATKIFVNCL…IDDSTTDLDF (195 aa).

Belongs to the eIF-3 subunit L family. Component of the eukaryotic translation initiation factor 3 (eIF-3) complex.

Its subcellular location is the cytoplasm. Its function is as follows. Component of the eukaryotic translation initiation factor 3 (eIF-3) complex, which is involved in protein synthesis of a specialized repertoire of mRNAs and, together with other initiation factors, stimulates binding of mRNA and methionyl-tRNAi to the 40S ribosome. The eIF-3 complex specifically targets and initiates translation of a subset of mRNAs involved in cell proliferation. This Brugia malayi (Filarial nematode worm) protein is Eukaryotic translation initiation factor 3 subunit L.